We begin with the raw amino-acid sequence, 177 residues long: Keratin-associated protein 1-1 (177 aa).

The protein belongs to the KRTAP type 1 family. Interacts with hair keratins. As to expression, expressed in the middle/upper portions of the hair cortex, in the region termed the keratogenous zone.

Functionally, in the hair cortex, hair keratin intermediate filaments are embedded in an interfilamentous matrix, consisting of hair keratin-associated proteins (KRTAP), which are essential for the formation of a rigid and resistant hair shaft through their extensive disulfide bond cross-linking with abundant cysteine residues of hair keratins. The matrix proteins include the high-sulfur and high-glycine-tyrosine keratins. The sequence is that of Keratin-associated protein 1-1 (KRTAP1-1) from Homo sapiens (Human).